A 984-amino-acid chain; its full sequence is Vacuolar sorting protein 3 (984 aa).

The CNH domain maps to 21–339; that stretch reads KIRALSLSPI…GCGPSLLAAD (319 aa). One copy of the CHCR repeat lies at 663-844; the sequence is VLTSDKRTEE…YLDPQNGKEP (182 aa).

Belongs to the TRAP1 family. In terms of assembly, component of the class C core vacuole/endosome tethering (CORVET) complex. Their common core is composed of the class C Vps core proteins VPS11, VCL1, VPS18 and VPS33, which in CORVET further associates with VPS3. Interacts directly with VPS11. Binds to RABF2A and RABF2B.

It localises to the endosome membrane. The protein localises to the cytoplasm. Its function is as follows. Essential protein required during embryogenesis. Believed to act as a component of the putative class C core vacuole/endosome tethering (CORVET) endosomal tethering complexes. CORVET is required for vacuolar transport of SYP22. Involved in root development. Plays a role in vesicle-mediated protein trafficking of the endocytic membrane transport pathway. The protein is Vacuolar sorting protein 3 of Arabidopsis thaliana (Mouse-ear cress).